A 218-amino-acid chain; its full sequence is Large ribosomal subunit protein bL25 (218 aa).

Positions 178–218 (VTPPTVTEDPDATEEDNTTAESVEATGERNDDNLDRPGRVE) are disordered. The segment covering 185–195 (EDPDATEEDNT) has biased composition (acidic residues). Residues 203–218 (TGERNDDNLDRPGRVE) are compositionally biased toward basic and acidic residues.

It belongs to the bacterial ribosomal protein bL25 family. CTC subfamily. As to quaternary structure, part of the 50S ribosomal subunit; part of the 5S rRNA/L5/L18/L25 subcomplex. Contacts the 5S rRNA. Binds to the 5S rRNA independently of L5 and L18.

Functionally, this is one of the proteins that binds to the 5S RNA in the ribosome where it forms part of the central protuberance. The polypeptide is Large ribosomal subunit protein bL25 (Shouchella clausii (strain KSM-K16) (Alkalihalobacillus clausii)).